The chain runs to 95 residues: Small ribosomal subunit protein bS18 (95 aa).

This sequence belongs to the bacterial ribosomal protein bS18 family. Part of the 30S ribosomal subunit. Forms a tight heterodimer with protein bS6.

In terms of biological role, binds as a heterodimer with protein bS6 to the central domain of the 16S rRNA, where it helps stabilize the platform of the 30S subunit. This is Small ribosomal subunit protein bS18 from Rickettsia rickettsii (strain Sheila Smith).